The chain runs to 333 residues: Transaldolase (333 aa).

K135 acts as the Schiff-base intermediate with substrate in catalysis.

The protein belongs to the transaldolase family. Type 1 subfamily. As to quaternary structure, homodimer.

The protein localises to the cytoplasm. It catalyses the reaction D-sedoheptulose 7-phosphate + D-glyceraldehyde 3-phosphate = D-erythrose 4-phosphate + beta-D-fructose 6-phosphate. It participates in carbohydrate degradation; pentose phosphate pathway; D-glyceraldehyde 3-phosphate and beta-D-fructose 6-phosphate from D-ribose 5-phosphate and D-xylulose 5-phosphate (non-oxidative stage): step 2/3. Transaldolase is important for the balance of metabolites in the pentose-phosphate pathway. The polypeptide is Transaldolase (Prochlorococcus marinus (strain MIT 9301)).